Consider the following 252-residue polypeptide: 4-hydroxy-tetrahydrodipicolinate reductase (252 aa).

Residues 8–13 (GCSGKM), 85–87 (CTT), and 109–112 (SANM) each bind NAD(+). Histidine 142 serves as the catalytic Proton donor/acceptor. Histidine 143 lines the (S)-2,3,4,5-tetrahydrodipicolinate pocket. Residue lysine 146 is the Proton donor of the active site. 152–153 (GT) provides a ligand contact to (S)-2,3,4,5-tetrahydrodipicolinate.

It belongs to the DapB family.

The protein localises to the cytoplasm. The catalysed reaction is (S)-2,3,4,5-tetrahydrodipicolinate + NAD(+) + H2O = (2S,4S)-4-hydroxy-2,3,4,5-tetrahydrodipicolinate + NADH + H(+). It carries out the reaction (S)-2,3,4,5-tetrahydrodipicolinate + NADP(+) + H2O = (2S,4S)-4-hydroxy-2,3,4,5-tetrahydrodipicolinate + NADPH + H(+). It functions in the pathway amino-acid biosynthesis; L-lysine biosynthesis via DAP pathway; (S)-tetrahydrodipicolinate from L-aspartate: step 4/4. Catalyzes the conversion of 4-hydroxy-tetrahydrodipicolinate (HTPA) to tetrahydrodipicolinate. The chain is 4-hydroxy-tetrahydrodipicolinate reductase from Clostridium novyi (strain NT).